Here is a 96-residue protein sequence, read N- to C-terminus: Small ribosomal subunit protein bS21 (96 aa).

Residues 52–96 form a disordered region; it reads RRARKQARKTAIREGLIAAPKPKARPVSPRRPAAPAPASSPVGAA. Over residues 69–96 the composition is skewed to low complexity; sequence AAPKPKARPVSPRRPAAPAPASSPVGAA.

Belongs to the bacterial ribosomal protein bS21 family.

This Methylobacterium nodulans (strain LMG 21967 / CNCM I-2342 / ORS 2060) protein is Small ribosomal subunit protein bS21.